The chain runs to 356 residues: MHIAVAVSGGTDSLFALLQVLEAGHQVTALHAHFLSPHDTPETTAHNTQAIEKACRALGADFHVEDLSAAFRKHVIEPFIDAYRQGRTPNPCARCNASMKFGLLADTARKLGAQAIATGHYARLQPDLPRPGNTVSLWRGDDPAKDQSYFLSLVPQHRLACAVFPLGGWRKQDVRAHLKQRGIVPPLPSESQEICFIPGDDYRAYLTAHAAGLPGAGPMVLRDGHVVGHHNGLWQYTEGQRRGLGIAWSEPLYVLEKDVSRNALVVGTRKQLTARGCRCVGVNTLVPPDQWPDAVYVKTRYRQTMIAAQVTPDADGADTMRVIFAASHTPPAAGQVAAVYDAAGRVLAGGIIASVF.

6–13 (AVSGGTDS) contacts ATP. Cys-95 functions as the Nucleophile in the catalytic mechanism. Cys-95 and Cys-195 form a disulfide bridge. Residue Gly-119 coordinates ATP. Residues 145–147 (KDQ) form an interaction with tRNA region. Cys-195 (cysteine persulfide intermediate) is an active-site residue. The interaction with tRNA stretch occupies residues 300-301 (RY).

It belongs to the MnmA/TRMU family.

It localises to the cytoplasm. The catalysed reaction is S-sulfanyl-L-cysteinyl-[protein] + uridine(34) in tRNA + AH2 + ATP = 2-thiouridine(34) in tRNA + L-cysteinyl-[protein] + A + AMP + diphosphate + H(+). Catalyzes the 2-thiolation of uridine at the wobble position (U34) of tRNA, leading to the formation of s(2)U34. In Oleidesulfovibrio alaskensis (strain ATCC BAA-1058 / DSM 17464 / G20) (Desulfovibrio alaskensis), this protein is tRNA-specific 2-thiouridylase MnmA.